The following is a 236-amino-acid chain: Lectin alpha chain (236 aa).

2 residues coordinate Mn(2+): Glu8 and Asp10. 4 residues coordinate Ca(2+): Asp10, Tyr12, Asn14, and Asp19. Tyr12 contacts a carbohydrate. Mn(2+)-binding residues include Asp19, His24, and Ser34. A carbohydrate is bound at residue 99 to 100; sequence LY. Asp207 contributes to the Ca(2+) binding site. Arg227 is an a carbohydrate binding site.

The protein belongs to the leguminous lectin family. Equilibrium between homodimer and homotetramer. Oligomerization is pH-dependent with homotetramers forming at pH 6.5 and above. Post-translationally, the beta and gamma chains are produced by partial proteolytic processing of the lectin alpha chain by an asparaginyl endopeptidase. Mixture of 60% alpha lectin and 40% of its beta and gamma proteolytic fragments. Seed.

In terms of biological role, D-mannose/D-glucose-binding lectin. Has anti-inflammatory activity in rats. Induces histamine release in mast cells from rat. Induces lymphocyte proliferation and IFNG production. This is Lectin alpha chain from Cratylia argentea (Cratylia floribunda).